Reading from the N-terminus, the 1035-residue chain is DNA polymerase I B, mitochondrial (1035 aa).

The N-terminal 42 residues, 1–42 (MAVAPPLPPAPARLLRRWQGSSPWLSSSFGRTRYFSRPAFAA), are a transit peptide targeting the mitochondrion. The disordered stretch occupies residues 100–124 (TNGTTPLRVGNLRHDPSEDIRSSNY). Residues 111 to 120 (LRHDPSEDIR) are compositionally biased toward basic and acidic residues. In terms of domain architecture, 3'-5' exonuclease spans 317–478 (FGNGKTCIWV…LYESLKNKLE (162 aa)). Positions 699–1032 (HAIAALCEVF…VDAKYAKSWY (334 aa)) are polymerase.

This sequence belongs to the DNA polymerase type-A family.

The protein resides in the mitochondrion. The enzyme catalyses DNA(n) + a 2'-deoxyribonucleoside 5'-triphosphate = DNA(n+1) + diphosphate. Its activity is regulated as follows. Not inhibited by aphidicolin. Its function is as follows. In addition to polymerase activity, this DNA polymerase exhibits 5'-3' exonuclease activity. May be required for DNA replication and accumulation in mitochondria. This is DNA polymerase I B, mitochondrial from Oryza sativa subsp. japonica (Rice).